The following is a 381-amino-acid chain: Sulfate adenylyltransferase (381 aa).

This sequence belongs to the sulfate adenylyltransferase family.

It carries out the reaction sulfate + ATP + H(+) = adenosine 5'-phosphosulfate + diphosphate. Its pathway is sulfur metabolism; hydrogen sulfide biosynthesis; sulfite from sulfate: step 1/3. This chain is Sulfate adenylyltransferase, found in Chloroflexus aurantiacus (strain ATCC 29366 / DSM 635 / J-10-fl).